The sequence spans 227 residues: Ribose-5-phosphate isomerase A (227 aa).

Residues 26-29 (TGST), 82-85 (DGAD), and 95-98 (KGGG) contribute to the substrate site. The active-site Proton acceptor is the Glu104. Residue Lys122 coordinates substrate.

The protein belongs to the ribose 5-phosphate isomerase family. As to quaternary structure, homodimer.

The enzyme catalyses aldehydo-D-ribose 5-phosphate = D-ribulose 5-phosphate. The protein operates within carbohydrate degradation; pentose phosphate pathway; D-ribose 5-phosphate from D-ribulose 5-phosphate (non-oxidative stage): step 1/1. In terms of biological role, catalyzes the reversible conversion of ribose-5-phosphate to ribulose 5-phosphate. The protein is Ribose-5-phosphate isomerase A of Streptococcus equi subsp. equi (strain 4047).